Consider the following 407-residue polypeptide: Large ribosomal subunit protein uL3-like (407 aa).

The span at 1 to 31 (MSHRKFSAPRHGHLGFLPHKRSRRHRGKVKS) shows a compositional bias: basic residues. Residues 1–37 (MSHRKFSAPRHGHLGFLPHKRSRRHRGKVKSWPRDDP) are disordered.

It belongs to the universal ribosomal protein uL3 family. Component of the large ribosomal subunit (LSU). Part of a LSU subcomplex, the 5S RNP which is composed of the 5S RNA, RPL5 and RPL11. Interacts with NVL in an ATP-dependent manner. Interacts with RRP1B. Interacts with IPO5, IPO7 and KPNB1; these interactions may be involved in RPL5 nuclear import for the assembly of ribosomal subunits. Interacts with RRP1B. Expression is restricted to striated muscles.

In terms of biological role, heart- and skeletal muscle-specific component of the ribosome, which regulates muscle function. Component of the large ribosomal subunit in striated muscle cells: replaces the RPL3 paralog in the ribosome in these cells. The ribosome is a large ribonucleoprotein complex responsible for the synthesis of proteins in the cell. Inhibits myotube growth and muscle function. This is Large ribosomal subunit protein uL3-like from Mus musculus (Mouse).